We begin with the raw amino-acid sequence, 100 residues long: Urease subunit gamma (100 aa).

This sequence belongs to the urease gamma subunit family. In terms of assembly, heterotrimer of UreA (gamma), UreB (beta) and UreC (alpha) subunits. Three heterotrimers associate to form the active enzyme.

The protein resides in the cytoplasm. The catalysed reaction is urea + 2 H2O + H(+) = hydrogencarbonate + 2 NH4(+). It functions in the pathway nitrogen metabolism; urea degradation; CO(2) and NH(3) from urea (urease route): step 1/1. The sequence is that of Urease subunit gamma from Marinobacter nauticus (strain ATCC 700491 / DSM 11845 / VT8) (Marinobacter aquaeolei).